We begin with the raw amino-acid sequence, 130 residues long: Ribosome-binding factor A (130 aa).

This sequence belongs to the RbfA family. As to quaternary structure, monomer. Binds 30S ribosomal subunits, but not 50S ribosomal subunits or 70S ribosomes.

Its subcellular location is the cytoplasm. Its function is as follows. One of several proteins that assist in the late maturation steps of the functional core of the 30S ribosomal subunit. Associates with free 30S ribosomal subunits (but not with 30S subunits that are part of 70S ribosomes or polysomes). Required for efficient processing of 16S rRNA. May interact with the 5'-terminal helix region of 16S rRNA. The protein is Ribosome-binding factor A of Flavobacterium johnsoniae (strain ATCC 17061 / DSM 2064 / JCM 8514 / BCRC 14874 / CCUG 350202 / NBRC 14942 / NCIMB 11054 / UW101) (Cytophaga johnsonae).